The chain runs to 300 residues: Acetaldehyde dehydrogenase 1 (300 aa).

Position 11 to 14 (11 to 14 (SGNI)) interacts with NAD(+). Cys-126 (acyl-thioester intermediate) is an active-site residue. Residues 157–165 (SAGPGTRAN) and Asn-276 contribute to the NAD(+) site.

Belongs to the acetaldehyde dehydrogenase family.

The enzyme catalyses acetaldehyde + NAD(+) + CoA = acetyl-CoA + NADH + H(+). This is Acetaldehyde dehydrogenase 1 from Rhodococcus erythropolis (strain PR4 / NBRC 100887).